The primary structure comprises 183 residues: ATP synthase subunit delta (183 aa).

Belongs to the ATPase delta chain family. F-type ATPases have 2 components, F(1) - the catalytic core - and F(0) - the membrane proton channel. F(1) has five subunits: alpha(3), beta(3), gamma(1), delta(1), epsilon(1). F(0) has three main subunits: a(1), b(2) and c(10-14). The alpha and beta chains form an alternating ring which encloses part of the gamma chain. F(1) is attached to F(0) by a central stalk formed by the gamma and epsilon chains, while a peripheral stalk is formed by the delta and b chains.

The protein localises to the cell inner membrane. F(1)F(0) ATP synthase produces ATP from ADP in the presence of a proton or sodium gradient. F-type ATPases consist of two structural domains, F(1) containing the extramembraneous catalytic core and F(0) containing the membrane proton channel, linked together by a central stalk and a peripheral stalk. During catalysis, ATP synthesis in the catalytic domain of F(1) is coupled via a rotary mechanism of the central stalk subunits to proton translocation. In terms of biological role, this protein is part of the stalk that links CF(0) to CF(1). It either transmits conformational changes from CF(0) to CF(1) or is implicated in proton conduction. This Thermosipho africanus (strain TCF52B) protein is ATP synthase subunit delta.